The chain runs to 908 residues: Serine/threonine-protein kinase minibrain (908 aa).

2 disordered regions span residues 1–46 (MYRL…QRHA) and 119–143 (KKRR…LYND). A Bipartite nuclear localization signal motif is present at residues 121–139 (RRAQQTQGDDDSSNKKERK). The span at 132–141 (SSNKKERKLY) shows a compositional bias: basic and acidic residues. The 321-residue stretch at 164–484 (YEIDSLIGKG…PYYALQHNFF (321 aa)) folds into the Protein kinase domain. Residues 170–178 (IGKGSFGQV), lysine 193, and 243–246 (FELL) each bind ATP. Aspartate 292 serves as the catalytic Proton acceptor. Disordered regions lie at residues 552 to 592 (AAGS…AGPG), 623 to 669 (NAHP…RHSR), and 863 to 895 (PAAQ…SSPM). Residues 556–566 (SGSGSSVGGGS) are compositionally biased toward gly residues. Over residues 567-576 (SAAQQQQAMP) the composition is skewed to low complexity. Over residues 577–589 (LPLPLPLPLPPLA) the composition is skewed to pro residues. Over residues 623-654 (NAHPPPSLANSHHSTNSLGSLNHISPGSTGCH) the composition is skewed to polar residues. Composition is skewed to low complexity over residues 655 to 664 (NNNSNSSNNN) and 868 to 893 (GISQ…SSSS).

It belongs to the protein kinase superfamily. CMGC Ser/Thr protein kinase family. MNB/DYRK subfamily. In ventral nerve cord and supraesophageal ganglion of embryos. Is most prominent in the mushroom body neuropil and the outer proliferation center of the optic lobes in third instar larvae.

The protein localises to the nucleus. It carries out the reaction L-seryl-[protein] + ATP = O-phospho-L-seryl-[protein] + ADP + H(+). The enzyme catalyses L-threonyl-[protein] + ATP = O-phospho-L-threonyl-[protein] + ADP + H(+). It catalyses the reaction L-tyrosyl-[protein] + ATP = O-phospho-L-tyrosyl-[protein] + ADP + H(+). In terms of biological role, role in the specific control of proper proliferation of optic lobe neuronal progeny. The sequence is that of Serine/threonine-protein kinase minibrain (mnb) from Drosophila melanogaster (Fruit fly).